Reading from the N-terminus, the 703-residue chain is Calcium-responsive transcription factor (703 aa).

Disordered stretches follow at residues 1-61 (MEQS…QNIP), 130-150 (GPLV…SDRN), and 517-539 (GNSQ…SLSP). Residues 9 to 22 (KVNHNDSEESKTDS) are compositionally biased toward basic and acidic residues. A compositionally biased stretch (polar residues) spans 23–34 (QHLTYMDSSEPS).

It is found in the nucleus. In terms of biological role, acts as a transcriptional activator that mediates the calcium- and neuron-selective induction of BDNF exon III transcription. Binds to the consensus calcium-response element CaRE1 5'-CTATTTCGAG-3' sequence. This chain is Calcium-responsive transcription factor (CARF), found in Bos taurus (Bovine).